The primary structure comprises 131 residues: Chromatin accessibility complex protein 1 (131 aa).

N-acetylalanine is present on Ala-2. Residues 100-124 (ASKYLKMLKEEKREEDEENDNDNES) are a coiled coil. Lys-102 is modified (N6-acetyllysine). Residues 109-131 (EEKREEDEENDNDNESDHDEADS) are disordered. Residues 112-131 (REEDEENDNDNESDHDEADS) are compositionally biased toward acidic residues. Phosphoserine is present on Ser-124.

As to quaternary structure, heterodimer with POLE3; binds to DNA. Component of the CHRAC ISWI chromatin remodeling complex at least composed of SMARCA5/SNF2H, BAZ1A/ACF1, CHRAC1 and POLE3; the complex preferentially binds DNA through the CHRAC1-POLE3 heterodimer and possesses ATP-dependent nucleosome-remodeling activity. Within the complex, the heterodimer with POLE3 interacts with SMARCA5/SNF2H; the interaction is direct and enhances nucleosome sliding activity by the SMARCA5/SNF2H and BAZ1A/ACF1 interaction. Within the complex, the heterodimer with POLE3 interacts with BAZ1A/ACF1; the interactions are direct. Expressed in heart, brain, placenta, lung, liver, skeletal muscle, kidney and pancreas.

It is found in the nucleus. In terms of biological role, forms a complex with DNA polymerase epsilon subunit POLE3 and binds naked DNA, which is then incorporated into chromatin, aided by the nucleosome remodeling activity of ISWI/SNF2H and ACF1. Does not enhance nucleosome sliding activity of the ACF-5 ISWI chromatin remodeling complex. This chain is Chromatin accessibility complex protein 1 (CHRAC1), found in Homo sapiens (Human).